The following is a 220-amino-acid chain: Probable GTP-binding protein EngB (220 aa).

In terms of domain architecture, EngB-type G spans 41–219 (DRSEVCFAGR…RAEIAALAML (179 aa)). GTP-binding positions include 49 to 56 (GRSNVGKS), 76 to 80 (GRTRE), 96 to 99 (DLPG), 164 to 167 (TKVD), and 197 to 200 (MTSA). Mg(2+) contacts are provided by Ser56 and Thr78.

The protein belongs to the TRAFAC class TrmE-Era-EngA-EngB-Septin-like GTPase superfamily. EngB GTPase family. Requires Mg(2+) as cofactor.

Its function is as follows. Necessary for normal cell division and for the maintenance of normal septation. The sequence is that of Probable GTP-binding protein EngB from Hyphomonas neptunium (strain ATCC 15444).